A 136-amino-acid chain; its full sequence is Protein PsiE homolog (136 aa).

Transmembrane regions (helical) follow at residues 15-35 (AMQA…VVFL), 58-78 (VEGL…VKYF), 82-102 (FHFP…RLII), and 108-128 (PLAV…LWLC).

Belongs to the PsiE family.

Its subcellular location is the cell inner membrane. This Klebsiella pneumoniae subsp. pneumoniae (strain ATCC 700721 / MGH 78578) protein is Protein PsiE homolog.